Consider the following 81-residue polypeptide: Control protein C.BamHI (81 aa).

Positions 13–68 (VRQIRLSKSNMSQEKLAFECDLHRTYISDIERGTRNVSLDNIEKISKALGVQPKDL) constitute an HTH cro/C1-type domain. The H-T-H motif DNA-binding region spans 25-44 (QEKLAFECDLHRTYISDIER).

Its function is as follows. May help modulate methylase (M) and restriction enzyme (R) expression as cells undergo physiological changes such as sporulation or transformation. The protein is Control protein C.BamHI of Bacillus amyloliquefaciens (Bacillus velezensis).